A 292-amino-acid chain; its full sequence is Elongation factor Ts (292 aa).

The segment at 79-82 is involved in Mg(2+) ion dislocation from EF-Tu; the sequence is TDFV.

The protein belongs to the EF-Ts family.

It localises to the cytoplasm. In terms of biological role, associates with the EF-Tu.GDP complex and induces the exchange of GDP to GTP. It remains bound to the aminoacyl-tRNA.EF-Tu.GTP complex up to the GTP hydrolysis stage on the ribosome. The polypeptide is Elongation factor Ts (Xanthomonas euvesicatoria pv. vesicatoria (strain 85-10) (Xanthomonas campestris pv. vesicatoria)).